Here is a 196-residue protein sequence, read N- to C-terminus: Large ribosomal subunit protein uL18 (196 aa).

It belongs to the universal ribosomal protein uL18 family. As to quaternary structure, part of the 50S ribosomal subunit. Contacts the 5S and 23S rRNAs.

Its function is as follows. This is one of the proteins that bind and probably mediate the attachment of the 5S RNA into the large ribosomal subunit, where it forms part of the central protuberance. This is Large ribosomal subunit protein uL18 from Thermofilum pendens (strain DSM 2475 / Hrk 5).